Consider the following 608-residue polypeptide: Aspartate--tRNA(Asp/Asn) ligase (608 aa).

Glu179 is an L-aspartate binding site. Positions 203–206 (QLFK) are aspartate. Arg225 provides a ligand contact to L-aspartate. ATP-binding positions include 225–227 (RDE) and Gln234. L-aspartate is bound at residue His461. Residue Glu494 coordinates ATP. Residue Arg501 coordinates L-aspartate. 546 to 549 (GLDR) is a binding site for ATP.

This sequence belongs to the class-II aminoacyl-tRNA synthetase family. Type 1 subfamily. As to quaternary structure, homodimer.

The protein resides in the cytoplasm. The enzyme catalyses tRNA(Asx) + L-aspartate + ATP = L-aspartyl-tRNA(Asx) + AMP + diphosphate. Aspartyl-tRNA synthetase with relaxed tRNA specificity since it is able to aspartylate not only its cognate tRNA(Asp) but also tRNA(Asn). Reaction proceeds in two steps: L-aspartate is first activated by ATP to form Asp-AMP and then transferred to the acceptor end of tRNA(Asp/Asn). The polypeptide is Aspartate--tRNA(Asp/Asn) ligase (Psychrobacter arcticus (strain DSM 17307 / VKM B-2377 / 273-4)).